Reading from the N-terminus, the 194-residue chain is Imidazoleglycerol-phosphate dehydratase (194 aa).

The protein belongs to the imidazoleglycerol-phosphate dehydratase family.

The protein localises to the cytoplasm. It catalyses the reaction D-erythro-1-(imidazol-4-yl)glycerol 3-phosphate = 3-(imidazol-4-yl)-2-oxopropyl phosphate + H2O. The protein operates within amino-acid biosynthesis; L-histidine biosynthesis; L-histidine from 5-phospho-alpha-D-ribose 1-diphosphate: step 6/9. In Halalkalibacterium halodurans (strain ATCC BAA-125 / DSM 18197 / FERM 7344 / JCM 9153 / C-125) (Bacillus halodurans), this protein is Imidazoleglycerol-phosphate dehydratase.